The following is a 606-amino-acid chain: Putative amino acid transporter AAT1 (606 aa).

Residues 1 to 156 (MNKKYGTSSN…DEEGTNKPKR (156 aa)) form a disordered region. Composition is skewed to basic and acidic residues over residues 12–25 (HDNK…ADKN) and 72–89 (SDKK…ESSK). Positions 140 to 149 (SDGDYTNDEE) are enriched in acidic residues. Transmembrane regions (helical) follow at residues 175–194 (TVLF…PYVF), 200–225 (ILSI…TSSL), 246–271 (TIID…SNFL), 283–301 (LFTN…ILPI), 313–332 (FLIF…GLQT), 352–372 (HFFK…NACF), 393–412 (VILQ…FSFL), 428–449 (VSIL…PLNF), 522–539 (MWIS…ACKV), 545–567 (VIGI…LIYY), and 579–605 (RYST…LNLI).

This sequence belongs to the amino acid/polyamine transporter 2 family.

It is found in the vacuole membrane. In terms of biological role, putative amino acid transporter. Probably transports tryptophan. Involved in maintaining the osmotic homeostasis of the digestive vacuole. Important for the timely development and growth of the asexual-stage parasites and male gametocyte maturation. The polypeptide is Putative amino acid transporter AAT1 (Plasmodium falciparum (isolate 3D7)).